A 136-amino-acid polypeptide reads, in one-letter code: MMTAAKRLGLYSALRACSATVFRSNLHPKVTVATMFCSVGTIPDVAEVSFSDSGAALFMSSSLWKVVAGFVPSRFWFSHTCLVFGSNTILFASLNSFKRSSSAIIKKVSLDTPVYVGLEKKNKMQPLLPCFFRRAV.

The signal sequence occupies residues 1-19; the sequence is MMTAAKRLGLYSALRACSA. A helical transmembrane segment spans residues 75-97; sequence FWFSHTCLVFGSNTILFASLNSF.

Its subcellular location is the membrane. This is an uncharacterized protein from Saccharomyces cerevisiae (strain ATCC 204508 / S288c) (Baker's yeast).